The primary structure comprises 126 residues: Aspartate 1-decarboxylase (126 aa).

The Schiff-base intermediate with substrate; via pyruvic acid role is filled by S25. A Pyruvic acid (Ser) modification is found at S25. T57 serves as a coordination point for substrate. Y58 functions as the Proton donor in the catalytic mechanism. 73–75 (GAA) lines the substrate pocket.

It belongs to the PanD family. In terms of assembly, heterooctamer of four alpha and four beta subunits. Pyruvate serves as cofactor. In terms of processing, is synthesized initially as an inactive proenzyme, which is activated by self-cleavage at a specific serine bond to produce a beta-subunit with a hydroxyl group at its C-terminus and an alpha-subunit with a pyruvoyl group at its N-terminus.

It localises to the cytoplasm. The enzyme catalyses L-aspartate + H(+) = beta-alanine + CO2. It participates in cofactor biosynthesis; (R)-pantothenate biosynthesis; beta-alanine from L-aspartate: step 1/1. In terms of biological role, catalyzes the pyruvoyl-dependent decarboxylation of aspartate to produce beta-alanine. The protein is Aspartate 1-decarboxylase of Pseudomonas fluorescens.